The primary structure comprises 363 residues: MINSLIKLARINVQKLQPYQSARRIGGQHGDVWLNANESPVSVELSFKKKLLNRYPECQPIDLISAYADYVRLSTNQILVTRGADEGIELLIRAFCESGKDAIIYCPPTYDMYRVNAEIYNIKYKEVPTIKNTWQLDLLNIKLNLNSVKLIYICNPNNPTGSTCSKKDLFDLLEMTLNTSLVVVDEAYIEFLPKESMTLYLKKYPNLVILRTLSKAFALAGIRCGFVLAQKEIINILNKIISPYPISIPTASIALESLHKNYIKLMQNRVLDLNANRVWLINKLKKISSVKKIFQSNTNYILVQFFMSEEIFQMLWEKGIIVRNQDHKINLKQCLRITVGTHLECSRLIEEIKFFSKKYLKGV.

N6-(pyridoxal phosphate)lysine is present on lysine 215.

This sequence belongs to the class-II pyridoxal-phosphate-dependent aminotransferase family. Histidinol-phosphate aminotransferase subfamily. As to quaternary structure, homodimer. The cofactor is pyridoxal 5'-phosphate.

It carries out the reaction L-histidinol phosphate + 2-oxoglutarate = 3-(imidazol-4-yl)-2-oxopropyl phosphate + L-glutamate. It participates in amino-acid biosynthesis; L-histidine biosynthesis; L-histidine from 5-phospho-alpha-D-ribose 1-diphosphate: step 7/9. The polypeptide is Histidinol-phosphate aminotransferase (Buchnera aphidicola subsp. Diuraphis noxia).